The primary structure comprises 469 residues: MAQTLYDKLWNSHVVHTEEDGTALLYIDRQLLHEVTSPQAFEGLKLAQRPVWRISANLAVSDHNVPTTDRSHGIADPVSKLQVDTLDANCDAYGITQFKMNDVRQGIVHIIGPEQGATLPGMTIVCGDSHTSTHGAFGALAHGIGTSEVEHVLATQTLLQKKSKNMLVKVEGQLPRGCTAKDIVLAIIGKIGTAGGTGYAIEFGGSTIRALTMEGRMTVCNMAIEAGARAGMVAVDDTTVEYLKGRPFVPTGAQWDQAVEYWKTFKSDEGAQFDRVVELNAAEIVPQVTWGTSPEMVTSIDGRVPDPEREKDPVKRDAMERALAYMALTPNTPIEAIKVDKIFIGSCTNARIEDIRAAAYVVKKLNRRVAPNVRLAMVVPGSGLVKAQAEREGLDKVFTEAGFEWREPGCSMCLAMNADRLEPGERCASTSNRNFEGRQGQGGRTHLVSPAMAAAAAIEGHFVDIRRLG.

Residues C347, C410, and C413 each contribute to the [4Fe-4S] cluster site.

It belongs to the aconitase/IPM isomerase family. LeuC type 1 subfamily. In terms of assembly, heterodimer of LeuC and LeuD. It depends on [4Fe-4S] cluster as a cofactor.

The catalysed reaction is (2R,3S)-3-isopropylmalate = (2S)-2-isopropylmalate. The protein operates within amino-acid biosynthesis; L-leucine biosynthesis; L-leucine from 3-methyl-2-oxobutanoate: step 2/4. Catalyzes the isomerization between 2-isopropylmalate and 3-isopropylmalate, via the formation of 2-isopropylmaleate. In Burkholderia thailandensis (strain ATCC 700388 / DSM 13276 / CCUG 48851 / CIP 106301 / E264), this protein is 3-isopropylmalate dehydratase large subunit.